We begin with the raw amino-acid sequence, 229 residues long: MANELTWHDVLAEEKQQPYFLNTLQTVASERQSGVTIYPPQKDVFNAFRFTELGDVKVVILGQDPYHGPGQAHGLAFSVRPGIAIPPSLLNMYKELENTIPGFTRPNHGYLESWARQGVLLLNTVLTVRAGQAHSHASLGWETFTDKVISLINQHREGVVFLLWGSHAQKKGAIIDKQRHHVLKAPHPSPLSAHRGFFGCNHFVLANQWLEQRGETPIDWMPVLPAECE.

Catalysis depends on Asp64, which acts as the Proton acceptor.

Belongs to the uracil-DNA glycosylase (UDG) superfamily. UNG family.

The protein resides in the cytoplasm. It catalyses the reaction Hydrolyzes single-stranded DNA or mismatched double-stranded DNA and polynucleotides, releasing free uracil.. In terms of biological role, excises uracil residues from the DNA which can arise as a result of misincorporation of dUMP residues by DNA polymerase or due to deamination of cytosine. This Shigella flexneri serotype 5b (strain 8401) protein is Uracil-DNA glycosylase.